Here is a 477-residue protein sequence, read N- to C-terminus: MLIKHTASVQWQLWIVAFGFFMQTLDTTIVNTALPSMAVSLGENPLRMQSVIVSYVLTVAVMLPASGWLADRVGVQRVFFSAIVLFTLGSILCARSETLNELIASRVVQGIGGAMMVPVGRLTVMKIVPREQYMAAMTFVTLPGQIGPLMGPALGGFLVQYASWHWIFLINIPVGIAGAIATLLLMPNYRMQTRRFDISGFILLAVGMATLTLALDGHKGMGLSATAIAGLVVAGVAALAGYWWHAHGNSRALFSLRLFKTRTYKVGLTASLLGRIGSGMLPFMTPLFMQVGMGFSPFHAGLMMIPMIIGSMGMKRIVVRVVNRFGYRNVLVAATLMLALISLSFPLVAMLGWIWLLPVVLFFQGMVNSLRFSAMNTLTLKDLPDRLASSGNSLLSMVMQLSMSLGVSIAGILIGSFAHHQVVTDSPAIHSAFIYSYCCMALIIALPALAFARVPADTTTNRTLTKEPGTGSTRLQQ.

Helical transmembrane passes span 13-33 (LWIV…VNTA), 50-70 (SVIV…GWLA), 73-93 (VGVQ…SILC), 107-127 (VVQG…VMKI), 139-159 (FVTL…GFLV), 166-186 (WIFL…LLLM), 196-216 (FDIS…LALD), 220-240 (GMGL…AALA), 268-288 (LTAS…TPLF), 291-311 (VGMG…IIGS), 326-348 (GYRN…FPLV), 352-374 (GWIW…RFSA), 394-414 (LLSM…GILI), and 432-452 (AFIY…LAFA).

It belongs to the major facilitator superfamily. TCR/Tet family.

The protein localises to the cell inner membrane. The polypeptide is Putative multidrug resistance protein MdtD (Serratia proteamaculans (strain 568)).